We begin with the raw amino-acid sequence, 421 residues long: Serine--tRNA ligase (421 aa).

Residue Thr-229–Glu-231 coordinates L-serine. Arg-260–Glu-262 provides a ligand contact to ATP. Glu-283 contributes to the L-serine binding site. An ATP-binding site is contributed by Glu-347–Ser-350. Residue Ser-383 participates in L-serine binding.

The protein belongs to the class-II aminoacyl-tRNA synthetase family. Type-1 seryl-tRNA synthetase subfamily. In terms of assembly, homodimer. The tRNA molecule binds across the dimer.

The protein resides in the cytoplasm. It catalyses the reaction tRNA(Ser) + L-serine + ATP = L-seryl-tRNA(Ser) + AMP + diphosphate + H(+). The enzyme catalyses tRNA(Sec) + L-serine + ATP = L-seryl-tRNA(Sec) + AMP + diphosphate + H(+). The protein operates within aminoacyl-tRNA biosynthesis; selenocysteinyl-tRNA(Sec) biosynthesis; L-seryl-tRNA(Sec) from L-serine and tRNA(Sec): step 1/1. Functionally, catalyzes the attachment of serine to tRNA(Ser). Is also able to aminoacylate tRNA(Sec) with serine, to form the misacylated tRNA L-seryl-tRNA(Sec), which will be further converted into selenocysteinyl-tRNA(Sec). This is Serine--tRNA ligase from Desulfitobacterium hafniense (strain DSM 10664 / DCB-2).